The following is a 262-amino-acid chain: Transcription factor bHLH81 (262 aa).

The interval 1–29 is disordered; the sequence is MQPTSVGSSGGGDDGGGRGGGGGLSRSGL. The span at 8–25 shows a compositional bias: gly residues; sequence SSGGGDDGGGRGGGGGLS. A bHLH domain is found at 190–240; it reads CATHPRSIAERVRRTRISDRIRKLQELVPNMDKQTNTADMLEEAVEYVKVL.

As to quaternary structure, homodimer. Expressed in flowers.

The protein localises to the nucleus. The sequence is that of Transcription factor bHLH81 (BHLH81) from Arabidopsis thaliana (Mouse-ear cress).